Consider the following 475-residue polypeptide: FAD-dependent monooxygenase spyC (475 aa).

The N-terminal stretch at 1 to 24 is a signal peptide; that stretch reads MTAKPPFKVIIVGGSIAGLTLAHC. FAD is bound by residues glutamate 36, glycine 50, arginine 109, aspartate 310, and alanine 323. A helical membrane pass occupies residues 444–464; that stretch reads LLIPFLYPVVAFSLCVLAWIG.

Belongs to the paxM FAD-dependent monooxygenase family. FAD is required as a cofactor.

The protein localises to the membrane. The enzyme catalyses (2E,6E,10E)-geranylgeranyl-triacetate lactone + AH2 + O2 = (S)-(2E,6E,10E)-epoxygeranylgeranyl-triacetate lactone + A + H2O. It participates in secondary metabolite biosynthesis; terpenoid biosynthesis. Functionally, FAD-dependent monooxygenase spyC; part of the gene cluster that mediates the biosynthesis of meroterpenoids called sartorypyrones. Within the pathway, spyC catalyzes the epoxidation of geranylgeranyl-triacetate lactone at the terminal olein to yield epoxygeranylgeranyl-triacetate lactone. The biosynthesis of sartorypyrones begins with the production of triacetic acid lactone (TAL) by the NR-PKS spyA using one molecule of acetyl-CoA and two molecules of malonyl-CoA. The prenyltransferase spyF then conjugates geranylgeranyl pyrophosphate (GGPP) to TAL to form geranylgeranyl-triacetate lactone, for which the pathway-specific geranylgeranyl pyrophosphate synthase (GGPS) spyE is required to provide GGPP. Subsequently, geranylgeranyl-triacetate lactone is epoxidized at the terminal olein by the FAD-dependent monooxygenase spyC, followed by cyclization of the terpenoid component catalyzed by the terpene cyclase spyD to produce both the bicyclic sartorypyrone F and the monocyclic sartorypyrone D. Finally, the last step of the biosynthesis involves the acetylation of the meroterpenoids sartorypyrones D and F by the acetyltransferase SpyB to produce sartorypyrones A and G, respectively. This Aspergillus fumigatus (strain ATCC MYA-4609 / CBS 101355 / FGSC A1100 / Af293) (Neosartorya fumigata) protein is FAD-dependent monooxygenase spyC.